The chain runs to 528 residues: Cytochrome P450 1A5 (528 aa).

Cys-467 contributes to the heme binding site.

Belongs to the cytochrome P450 family. Heme is required as a cofactor.

The protein localises to the endoplasmic reticulum membrane. Its subcellular location is the microsome membrane. It catalyses the reaction an organic molecule + reduced [NADPH--hemoprotein reductase] + O2 = an alcohol + oxidized [NADPH--hemoprotein reductase] + H2O + H(+). In terms of biological role, cytochromes P450 are a group of heme-thiolate monooxygenases. In liver microsomes, this enzyme is involved in an NADPH-dependent electron transport pathway. It oxidizes a variety of structurally unrelated compounds, including steroids, fatty acids, and xenobiotics. This chain is Cytochrome P450 1A5 (CYP1A5), found in Gallus gallus (Chicken).